The chain runs to 162 residues: 2-C-methyl-D-erythritol 2,4-cyclodiphosphate synthase (162 aa).

2 residues coordinate a divalent metal cation: Asp12 and His14. 4-CDP-2-C-methyl-D-erythritol 2-phosphate-binding positions include 12–14 and 38–39; these read DVH and HS. A divalent metal cation is bound at residue His46. 4-CDP-2-C-methyl-D-erythritol 2-phosphate is bound by residues 60–62, 65–69, and Arg146; these read DIG and FPDTD.

It belongs to the IspF family. Homotrimer. The cofactor is a divalent metal cation.

It carries out the reaction 4-CDP-2-C-methyl-D-erythritol 2-phosphate = 2-C-methyl-D-erythritol 2,4-cyclic diphosphate + CMP. Its pathway is isoprenoid biosynthesis; isopentenyl diphosphate biosynthesis via DXP pathway; isopentenyl diphosphate from 1-deoxy-D-xylulose 5-phosphate: step 4/6. Involved in the biosynthesis of isopentenyl diphosphate (IPP) and dimethylallyl diphosphate (DMAPP), two major building blocks of isoprenoid compounds. Catalyzes the conversion of 4-diphosphocytidyl-2-C-methyl-D-erythritol 2-phosphate (CDP-ME2P) to 2-C-methyl-D-erythritol 2,4-cyclodiphosphate (ME-CPP) with a corresponding release of cytidine 5-monophosphate (CMP). In Bordetella avium (strain 197N), this protein is 2-C-methyl-D-erythritol 2,4-cyclodiphosphate synthase.